We begin with the raw amino-acid sequence, 289 residues long: 3-methyl-2-oxobutanoate hydroxymethyltransferase (289 aa).

Positions 1 to 15 (MSTTFKLDTSTSRAN) are enriched in polar residues. Residues 1 to 21 (MSTTFKLDTSTSRANPTPAPM) form a disordered region. Mg(2+)-binding residues include aspartate 67 and aspartate 106. Residues 67–68 (DS), aspartate 106, and lysine 136 each bind 3-methyl-2-oxobutanoate. Residue glutamate 138 participates in Mg(2+) binding. The active-site Proton acceptor is glutamate 205.

The protein belongs to the PanB family. Homodecamer; pentamer of dimers. Mg(2+) is required as a cofactor.

Its subcellular location is the cytoplasm. The catalysed reaction is 3-methyl-2-oxobutanoate + (6R)-5,10-methylene-5,6,7,8-tetrahydrofolate + H2O = 2-dehydropantoate + (6S)-5,6,7,8-tetrahydrofolate. It participates in cofactor biosynthesis; (R)-pantothenate biosynthesis; (R)-pantoate from 3-methyl-2-oxobutanoate: step 1/2. Catalyzes the reversible reaction in which hydroxymethyl group from 5,10-methylenetetrahydrofolate is transferred onto alpha-ketoisovalerate to form ketopantoate. The protein is 3-methyl-2-oxobutanoate hydroxymethyltransferase of Erythrobacter litoralis (strain HTCC2594).